The sequence spans 142 residues: Large ribosomal subunit protein uL11 (142 aa).

This sequence belongs to the universal ribosomal protein uL11 family. In terms of assembly, part of the ribosomal stalk of the 50S ribosomal subunit. Interacts with L10 and the large rRNA to form the base of the stalk. L10 forms an elongated spine to which L12 dimers bind in a sequential fashion forming a multimeric L10(L12)X complex. Post-translationally, one or more lysine residues are methylated.

Functionally, forms part of the ribosomal stalk which helps the ribosome interact with GTP-bound translation factors. The sequence is that of Large ribosomal subunit protein uL11 from Desulfitobacterium hafniense (strain DSM 10664 / DCB-2).